We begin with the raw amino-acid sequence, 436 residues long: Glutamyl-tRNA reductase (436 aa).

Residues 50–53 (TCNR), serine 110, 115–117 (ETQ), and glutamine 121 each bind substrate. Cysteine 51 acts as the Nucleophile in catalysis. 190–195 (GLGEMS) contacts NADP(+).

It belongs to the glutamyl-tRNA reductase family. Homodimer.

It catalyses the reaction (S)-4-amino-5-oxopentanoate + tRNA(Glu) + NADP(+) = L-glutamyl-tRNA(Glu) + NADPH + H(+). The protein operates within porphyrin-containing compound metabolism; protoporphyrin-IX biosynthesis; 5-aminolevulinate from L-glutamyl-tRNA(Glu): step 1/2. Catalyzes the NADPH-dependent reduction of glutamyl-tRNA(Glu) to glutamate 1-semialdehyde (GSA). This is Glutamyl-tRNA reductase from Wolinella succinogenes (strain ATCC 29543 / DSM 1740 / CCUG 13145 / JCM 31913 / LMG 7466 / NCTC 11488 / FDC 602W) (Vibrio succinogenes).